The sequence spans 253 residues: Ubiquinone biosynthesis O-methyltransferase (253 aa).

Residues arginine 41, glycine 72, aspartate 93, and leucine 136 each coordinate S-adenosyl-L-methionine.

Belongs to the methyltransferase superfamily. UbiG/COQ3 family.

The enzyme catalyses a 3-demethylubiquinol + S-adenosyl-L-methionine = a ubiquinol + S-adenosyl-L-homocysteine + H(+). It catalyses the reaction a 3-(all-trans-polyprenyl)benzene-1,2-diol + S-adenosyl-L-methionine = a 2-methoxy-6-(all-trans-polyprenyl)phenol + S-adenosyl-L-homocysteine + H(+). The protein operates within cofactor biosynthesis; ubiquinone biosynthesis. Its function is as follows. O-methyltransferase that catalyzes the 2 O-methylation steps in the ubiquinone biosynthetic pathway. The protein is Ubiquinone biosynthesis O-methyltransferase of Azorhizobium caulinodans (strain ATCC 43989 / DSM 5975 / JCM 20966 / LMG 6465 / NBRC 14845 / NCIMB 13405 / ORS 571).